The sequence spans 466 residues: Soluble pyridine nucleotide transhydrogenase (466 aa).

36-45 provides a ligand contact to FAD; it reads ERYQNVGGGC.

This sequence belongs to the class-I pyridine nucleotide-disulfide oxidoreductase family. FAD serves as cofactor.

It localises to the cytoplasm. It catalyses the reaction NAD(+) + NADPH = NADH + NADP(+). Conversion of NADPH, generated by peripheral catabolic pathways, to NADH, which can enter the respiratory chain for energy generation. This is Soluble pyridine nucleotide transhydrogenase from Escherichia coli O9:H4 (strain HS).